Reading from the N-terminus, the 261-residue chain is Guanine nucleotide exchange factor BopE (261 aa).

This sequence belongs to the GEF (guanine exchange factor) SopE family. As to quaternary structure, monomer. Interacts with human CDC42.

The protein resides in the secreted. In terms of biological role, activator for both CDC42 and RAC1 by directly interacting with these Rho GTPases and acting as a guanine nucleotide exchange factor (GEF). This activation results in actin cytoskeleton rearrangements and stimulates membrane ruffling, thus promoting bacterial entry into non-phagocytic cells. This Burkholderia mallei (strain NCTC 10247) protein is Guanine nucleotide exchange factor BopE (bopE).